A 262-amino-acid polypeptide reads, in one-letter code: Phosphatidylserine decarboxylase proenzyme (262 aa).

Residues Asp86, His142, and Ser226 each act as charge relay system; for autoendoproteolytic cleavage activity in the active site. Ser226 (schiff-base intermediate with substrate; via pyruvic acid; for decarboxylase activity) is an active-site residue. Ser226 bears the Pyruvic acid (Ser); by autocatalysis mark.

The protein belongs to the phosphatidylserine decarboxylase family. PSD-B subfamily. Prokaryotic type I sub-subfamily. In terms of assembly, heterodimer of a large membrane-associated beta subunit and a small pyruvoyl-containing alpha subunit. Pyruvate is required as a cofactor. Is synthesized initially as an inactive proenzyme. Formation of the active enzyme involves a self-maturation process in which the active site pyruvoyl group is generated from an internal serine residue via an autocatalytic post-translational modification. Two non-identical subunits are generated from the proenzyme in this reaction, and the pyruvate is formed at the N-terminus of the alpha chain, which is derived from the carboxyl end of the proenzyme. The autoendoproteolytic cleavage occurs by a canonical serine protease mechanism, in which the side chain hydroxyl group of the serine supplies its oxygen atom to form the C-terminus of the beta chain, while the remainder of the serine residue undergoes an oxidative deamination to produce ammonia and the pyruvoyl prosthetic group on the alpha chain. During this reaction, the Ser that is part of the protease active site of the proenzyme becomes the pyruvoyl prosthetic group, which constitutes an essential element of the active site of the mature decarboxylase.

The protein resides in the cell membrane. The enzyme catalyses a 1,2-diacyl-sn-glycero-3-phospho-L-serine + H(+) = a 1,2-diacyl-sn-glycero-3-phosphoethanolamine + CO2. The protein operates within phospholipid metabolism; phosphatidylethanolamine biosynthesis; phosphatidylethanolamine from CDP-diacylglycerol: step 2/2. Catalyzes the formation of phosphatidylethanolamine (PtdEtn) from phosphatidylserine (PtdSer). This Bacillus cereus (strain AH820) protein is Phosphatidylserine decarboxylase proenzyme.